A 452-amino-acid chain; its full sequence is Bifunctional protein GlmU (452 aa).

The pyrophosphorylase stretch occupies residues 1–226 (MAFSVVVLAA…AVEVEGVNNR (226 aa)). UDP-N-acetyl-alpha-D-glucosamine-binding positions include 8 to 11 (LAAG), K22, Q73, and 78 to 79 (GT). A Mg(2+)-binding site is contributed by D102. UDP-N-acetyl-alpha-D-glucosamine contacts are provided by G137, E151, N166, and N224. N224 contributes to the Mg(2+) binding site. The linker stretch occupies residues 227–247 (LQLANLERALQNRQADELMTN). Positions 248 to 452 (GVTLLDPSRF…IPNWPRPTKK (205 aa)) are N-acetyltransferase. The UDP-N-acetyl-alpha-D-glucosamine site is built by R330 and K348. The Proton acceptor role is filled by H360. 2 residues coordinate UDP-N-acetyl-alpha-D-glucosamine: Y363 and N374. Residues A377, 383-384 (NY), S402, A420, and R437 contribute to the acetyl-CoA site.

This sequence in the N-terminal section; belongs to the N-acetylglucosamine-1-phosphate uridyltransferase family. In the C-terminal section; belongs to the transferase hexapeptide repeat family. In terms of assembly, homotrimer. Mg(2+) serves as cofactor.

The protein localises to the cytoplasm. It catalyses the reaction alpha-D-glucosamine 1-phosphate + acetyl-CoA = N-acetyl-alpha-D-glucosamine 1-phosphate + CoA + H(+). The catalysed reaction is N-acetyl-alpha-D-glucosamine 1-phosphate + UTP + H(+) = UDP-N-acetyl-alpha-D-glucosamine + diphosphate. The protein operates within nucleotide-sugar biosynthesis; UDP-N-acetyl-alpha-D-glucosamine biosynthesis; N-acetyl-alpha-D-glucosamine 1-phosphate from alpha-D-glucosamine 6-phosphate (route II): step 2/2. It functions in the pathway nucleotide-sugar biosynthesis; UDP-N-acetyl-alpha-D-glucosamine biosynthesis; UDP-N-acetyl-alpha-D-glucosamine from N-acetyl-alpha-D-glucosamine 1-phosphate: step 1/1. Its pathway is bacterial outer membrane biogenesis; LPS lipid A biosynthesis. Catalyzes the last two sequential reactions in the de novo biosynthetic pathway for UDP-N-acetylglucosamine (UDP-GlcNAc). The C-terminal domain catalyzes the transfer of acetyl group from acetyl coenzyme A to glucosamine-1-phosphate (GlcN-1-P) to produce N-acetylglucosamine-1-phosphate (GlcNAc-1-P), which is converted into UDP-GlcNAc by the transfer of uridine 5-monophosphate (from uridine 5-triphosphate), a reaction catalyzed by the N-terminal domain. The sequence is that of Bifunctional protein GlmU from Alteromonas mediterranea (strain DSM 17117 / CIP 110805 / LMG 28347 / Deep ecotype).